The following is a 139-amino-acid chain: Coat protein TP2 (139 aa).

The protein resides in the virion. This is Coat protein TP2 from Thermoproteus tenax virus 1 (strain KRA1) (TTV1).